Reading from the N-terminus, the 400-residue chain is Poly(A) polymerase type 3 (400 aa).

ATP is bound by residues F97–S99, T106, D110–D112, D164, K225, Y234, and G243–V244. Mg(2+)-binding residues include D110, D112, and D164. Positions G382 to K390 match the Nuclear localization signal motif.

The protein belongs to the poly(A) polymerase family. In terms of assembly, monomer. Mg(2+) serves as cofactor. Requires Mn(2+) as cofactor.

Its subcellular location is the nucleus. It carries out the reaction RNA(n) + ATP = RNA(n)-3'-adenine ribonucleotide + diphosphate. In terms of biological role, polymerase that creates the 3'-poly(A) tail of mRNA's. May acquire specificity through interaction with a cleavage and polyadenylation factor (CPSF). The sequence is that of Poly(A) polymerase type 3 from Xenopus laevis (African clawed frog).